We begin with the raw amino-acid sequence, 338 residues long: Heat shock factor 2-binding protein (338 aa).

The tract at residues 1–20 (MAATVGDGSGTEEACRNMES) is disordered. Residues 12-126 (EEACRNMESK…LLQQAEYCTQ (115 aa)) are a coiled coil. The interaction with BRME1 stretch occupies residues 18 to 55 (MESKEEFVKVRKKDLERLTTEVMQIRDFLPRILNGELL). The interaction with BRCA2 stretch occupies residues 87 to 338 (ARLETAQADS…EDLRALDCNV (252 aa)).

In terms of assembly, interacts (via C-terminus) with BNC1. Associates with HSF2. The interaction seems to occur between the trimerization domain of HSF2 and the N-terminal hydrophilic region of HSF2BP. Interacts (via N-terminus) with BRME1. Interacts with BRCA2 and BRME1; the interactions are direct and allow the formation of a ternary complex. The complex BRME1:HSF2BP:BRCA2 interacts with SPATA22, MEIOB and RAD51. In terms of processing, sumoylated by UBE2I in response to MEKK1-mediated stimuli. As to expression, expressed in testis and, to a lesser extent, in lung and muscle.

It localises to the cytoplasm. Its subcellular location is the chromosome. Meiotic recombination factor component of recombination bridges involved in meiotic double-strand break repair. Modulates the localization of recombinases DMC1:RAD51 to meiotic double-strand break (DSB) sites through the interaction with BRCA2 and its recruitment during meiotic recombination. Indispensable for the DSB repair, homologous synapsis, and crossover formation that are needed for progression past metaphase I, is essential for spermatogenesis and male fertility. Required for proper recombinase recruitment in female meiosis. Inhibits BNC1 transcriptional activity during spermatogenesis, probably by sequestering it in the cytoplasm. May be involved in modulating HSF2 activation in testis. This Mus musculus (Mouse) protein is Heat shock factor 2-binding protein.